A 112-amino-acid polypeptide reads, in one-letter code: Small ribosomal subunit protein bS6 (112 aa).

This sequence belongs to the bacterial ribosomal protein bS6 family.

Its function is as follows. Binds together with bS18 to 16S ribosomal RNA. This Azobacteroides pseudotrichonymphae genomovar. CFP2 protein is Small ribosomal subunit protein bS6.